Reading from the N-terminus, the 1088-residue chain is Methionine S-methyltransferase (1088 aa).

Belongs to the class I-like SAM-binding methyltransferase superfamily. As to quaternary structure, homotetramer. In terms of tissue distribution, expressed in the shoot, scutellum, and aleurone cells but not in the root or endosperm.

The protein localises to the cytoplasm. The enzyme catalyses L-methionine + S-adenosyl-L-methionine = S-methyl-L-methionine + S-adenosyl-L-homocysteine. In terms of biological role, catalyzes the S-methylmethionine (SMM) biosynthesis from adenosyl-L-homocysteine (AdoMet) and methionine. SMM biosynthesis (by MMT1) and degradation (by HMT-1, HMT-2 and HMT-3) constitute the SMM cycle in plants, which is probably required to achieve short term control of AdoMet level. Also able to catalyze the selenium-methylmethionine (SeMM) from AdoMet and selenium-methionine (SeMet). May play a role in phoem sulfur transport; such function is however not essential. This chain is Methionine S-methyltransferase (MMT1), found in Hordeum vulgare (Barley).